A 249-amino-acid chain; its full sequence is Derlin-2.2 (249 aa).

Over 1–21 the chain is Cytoplasmic; that stretch reads MAQAVEEWYRQMPIITRSYLT. A helical membrane pass occupies residues 22–42; the sequence is AAVVTTVGCTLEIISPYHLYL. The Lumenal segment spans residues 43–96; that stretch reads NPKLVVQHYEIWRLVTNFLYFRKMDLDFLFHMFFLARYCKLLEENSFRGRTADF. A helical membrane pass occupies residues 97–117; sequence FYMLLFGATVLTGIVLIGGMI. At 118-122 the chain is on the cytoplasmic side; the sequence is PYISE. Residues 123-143 form a helical membrane-spanning segment; that stretch reads TFARILFLSNSLTFMMVYVWS. The Lumenal segment spans residues 144–152; it reads KHNPFIHMS. A helical transmembrane segment spans residues 153-173; it reads FLGLFTFTAAYLPWVLLGFSI. Over 174-249 the chain is Cytoplasmic; that stretch reads LVGSSTWVDL…GAIGVDPQAQ (76 aa).

It belongs to the derlin family. Expressed in roots, stalks, leaves, immature ears, embryo and endosperm.

The protein localises to the endoplasmic reticulum membrane. In terms of biological role, may be involved in the degradation process of specific misfolded endoplasmic reticulum (ER) luminal proteins. This Zea mays (Maize) protein is Derlin-2.2 (DER2.2).